The sequence spans 393 residues: MSHRRSTVKGSLSFANPTVRAWLFQILAVVAVVGIVGWLFHNTVTNLNNRGITSGFAFLDRGAGFGIVQHLIDYQQGDTYGRVFIVGLLNTLLVSALCIVFASVLGFFIGLARLSDNWLLRKLSTIYIEIFRNIPPLLQIFFWYFAVLRNLPGPRQAVSAFDLAFLSNRGLYIPSPQLGDGFIAFILAVVMAIVLSVGLFRFNKTYQIKTGQLRRTWPIAAVLIIGLPLLAQWLFGAALHWDVPALRGFNFRGGMVLIPELAALTLALSVYTSAFIAEIIRAGIQAVPYGQHEAARSLGLPNPVTLRQVIIPQALRVIIPPLTSQYLNIVKNSSLAAAIGYPDMVSLFAGTVLNQTGQAIETIAMTMSVYLIISLTISLLMNIYNRRIAIVER.

The next 8 helical transmembrane spans lie at 21–41, 92–112, 128–148, 180–200, 219–239, 256–276, 333–353, and 363–383; these read AWLFQILAVVAVVGIVGWLFH, LLVSALCIVFASVLGFFIGLA, IEIFRNIPPLLQIFFWYFAVL, DGFIAFILAVVMAIVLSVGLF, IAAVLIIGLPLLAQWLFGAAL, VLIPELAALTLALSVYTSAFI, SSLAAAIGYPDMVSLFAGTVL, and IAMTMSVYLIISLTISLLMNI. One can recognise an ABC transmembrane type-1 domain in the interval 88–381; it reads LLNTLLVSAL…IISLTISLLM (294 aa).

It belongs to the binding-protein-dependent transport system permease family. HisMQ subfamily.

The protein resides in the cell inner membrane. In terms of biological role, probably part of the binding-protein-dependent transport system YdhWXYZ for an amino acid; probably responsible for the translocation of the substrate across the membrane. The sequence is that of Putative amino-acid ABC transporter permease protein YhdX (yhdX) from Escherichia coli (strain K12).